Consider the following 592-residue polypeptide: AT-rich interactive domain-containing protein 5A (592 aa).

The disordered stretch occupies residues 1 to 53 (MAPPVKGKRKQSEEGEPLDPPVSPQPDGEPRSRSPVRLEEPPEAGREREEEQE). The interval 1-299 (MAPPVKGKRK…AAPPLESPQS (299 aa)) is interaction with SOX9. Phosphoserine is present on Ser-23. The span at 28–49 (GEPRSRSPVRLEEPPEAGRERE) shows a compositional bias: basic and acidic residues. Residues 52-144 (QEEEQAFLVS…LVLPYVRHLK (93 aa)) enclose the ARID domain. Glycyl lysine isopeptide (Lys-Gly) (interchain with G-Cter in ubiquitin) cross-links involve residues Lys-82 and Lys-91. Residues 143 to 225 (LKGEDDKPLP…RGPAAGPSLP (83 aa)) form a disordered region. Basic and acidic residues predominate over residues 162–186 (MAKEPRGDDGATERPKKVKEEKRVD). Ser-253 is modified (phosphoserine). The segment at 277–333 (CRHGAGGEPQAPPAAPPLESPQSPGGPAEDSRHRLTPLEGRQAPGGGLWGETQAGPR) is disordered. Residues 286–295 (QAPPAAPPLE) show a composition bias toward pro residues. A phosphoserine mark is found at Ser-438 and Ser-463.

In terms of assembly, interacts with SOX9. Interacts with ESR1. Interacts with RORC. In terms of processing, phosphorylated by MAPK14 on serine residues involving a TLR4 signaling pathway upon lipopolysaccharide (LPS) stimulation leading to its ubiquitination and proteasomal degradation. Ubiquitinated leading to proteasomal degradation; involving WWP1 linked to MAPK14-mediated phosphorylation upon LPS stimulation.

The protein localises to the nucleus. Functionally, DNA-binding protein that may regulate transcription and act as a repressor by binding to AT-rich stretches in the promoter region of target genes. May act as repressor and down-regulate enhancer-dependent gene expressison. May positively regulate chondrocyte-specific transcription such as of COL2A1 in collaboration with SOX9 and positively regulate histone H3 acetylation at chondrocyte-specific genes. May stimulate early-stage chondrocyte differentiation and inhibit later stage differention. Can repress ESR1-mediated transcriptional activation; proposed to act as corepressor for selective nuclear hormone receptors. As an RNA-binding protein, involved in the regulation of inflammatory response by stabilizing selective inflammation-related mRNAs, such as STAT3 and TBX21. Also stabilizes IL6 mRNA. Binds to stem loop structures located in the 3'UTRs of IL6, STAT3 and TBX21 mRNAs; at least for STAT3 prevents binding of ZC3H12A to the mRNA stem loop structure thus inhibiting its degradation activity. Contributes to elevated IL6 levels possibly implicated in autoimmunity processes. IL6-dependent stabilization of STAT3 mRNA may promote differentiation of naive CD4+ T-cells into T-helper Th17 cells. In CD4+ T-cells may also inhibit RORC-induced Th17 cell differentiation independently of IL6 signaling. Stabilization of TBX21 mRNA contributes to elevated interferon-gamma secretion in Th1 cells possibly implicated in the establishment of septic shock. Stabilizes TNFRSF4/OX40 mRNA by binding to the conserved stem loop structure in its 3'UTR; thereby competing with the mRNA-destabilizing functions of RC3H1 and endoribonuclease ZC3H12A. The chain is AT-rich interactive domain-containing protein 5A (ARID5A) from Bos taurus (Bovine).